Here is a 382-residue protein sequence, read N- to C-terminus: Mannitol-1-phosphate 5-dehydrogenase (382 aa).

3-14 provides a ligand contact to NAD(+); the sequence is ALHFGAGNIGRG.

It belongs to the mannitol dehydrogenase family.

It catalyses the reaction D-mannitol 1-phosphate + NAD(+) = beta-D-fructose 6-phosphate + NADH + H(+). This Salmonella agona (strain SL483) protein is Mannitol-1-phosphate 5-dehydrogenase.